Here is a 113-residue protein sequence, read N- to C-terminus: Dynein light chain Tctex-type 1 (113 aa).

Residue Met1 is modified to N-acetylmethionine. The interval 41–113 is interaction with GNB1; the sequence is QWTTNVVEQT…CIVSAFGLSI (73 aa).

The protein belongs to the dynein light chain Tctex-type family. As to quaternary structure, homodimer. The cytoplasmic dynein 1 complex consists of two catalytic heavy chains (HCs) and a number of non-catalytic subunits presented by intermediate chains (ICs), light intermediate chains (LICs) and light chains (LCs); the composition seems to vary in respect to the IC, LIC and LC composition. The heavy chain homodimer serves as a scaffold for the probable homodimeric assembly of the non-catalytic subunits. The ICs and LICs bind directly to the HC dimer and the LCs assemble on the IC dimer. DYNLT1 and DYNLT3 compete for association with dynein IC (DYNC1I1 or DYNC1I2). Self-associates. Interacts with RHO. Interacts with DYNC1I1 and DYNC1I2. Interacts with DOC2A, DOC2B and SCN10A. Interacts with PVR. Interacts with SVIL isoform 2. Interacts with GNB1; the interaction occurs in presence of guanine nucleotide-binding protein G(T) subunit gamma; the interaction diminishes the association of DYNLT1 with dynein IC (DYNC1I1 or DYNC1I2). Interacts with GNB2, GNB3 and GNB5; the interactions occur in presence of guanine nucleotide-binding protein G(T) subunit gamma. Interacts with ACVR2B and ARHGEF2. Interacts with DNAI4. Interacts with CFAP61. Post-translationally, phosphorylated by BMPR2. The phosphorylation status is proposed to regulate the association with the cytoplasmic dynein complex and may have role in cytoplasmic dynein cargo release.

The protein resides in the golgi apparatus. Its subcellular location is the cytoplasm. It localises to the cytoskeleton. The protein localises to the spindle. In terms of biological role, acts as one of several non-catalytic accessory components of the cytoplasmic dynein 1 complex that are thought to be involved in linking dynein to cargos and to adapter proteins that regulate dynein function. Cytoplasmic dynein 1 acts as a motor for the intracellular retrograde motility of vesicles and organelles along microtubules. Binds to transport cargos and is involved in apical cargo transport such as rhodopsin-bearing vesicles in polarized epithelia. May also be a accessory component of axonemal dynein. Plays a role in neuronal morphogenesis; the function is independent of cytoplasmic dynein and seems to be coupled to regulation of the actin cytoskeleton by enhancing Rac1 activity. The function in neurogenesis may be regulated by association with a G-protein beta-gamma dimer. May function as a receptor-independent activator of heterotrimeric G-protein signaling; the activation appears to be independent of a nucleotide exchange. Plays a role in regulating neurogenesis; inhibits the genesis of neurons from precursor cells during cortical development presumably by antagonizing ARHGEF2. Involved in the regulation of mitotic spindle orientation. Unrelated to the role in retrograde microtubule-associated movement may play a role in the dimerization of cytoplasmic proteins/domains such as for ACVR2B. Binds to the cytoplasmic domain of ACVR2B and, in vitro, inhibits ACVR2B signaling. This is Dynein light chain Tctex-type 1 (DYNLT1) from Bos taurus (Bovine).